The chain runs to 188 residues: NAD(P)H-quinone oxidoreductase subunit J (188 aa).

Belongs to the complex I 30 kDa subunit family. As to quaternary structure, NDH-1 can be composed of about 15 different subunits; different subcomplexes with different compositions have been identified which probably have different functions.

It is found in the cellular thylakoid membrane. It catalyses the reaction a plastoquinone + NADH + (n+1) H(+)(in) = a plastoquinol + NAD(+) + n H(+)(out). The enzyme catalyses a plastoquinone + NADPH + (n+1) H(+)(in) = a plastoquinol + NADP(+) + n H(+)(out). In terms of biological role, NDH-1 shuttles electrons from an unknown electron donor, via FMN and iron-sulfur (Fe-S) centers, to quinones in the respiratory and/or the photosynthetic chain. The immediate electron acceptor for the enzyme in this species is believed to be plastoquinone. Couples the redox reaction to proton translocation, and thus conserves the redox energy in a proton gradient. Cyanobacterial NDH-1 also plays a role in inorganic carbon-concentration. The sequence is that of NAD(P)H-quinone oxidoreductase subunit J from Parasynechococcus marenigrum (strain WH8102).